We begin with the raw amino-acid sequence, 198 residues long: Small ribosomal subunit protein uS4c (198 aa).

Residues 17–40 form a disordered region; sequence TLPGLTSKRPKNRKDSMNRSSSRK. The S4 RNA-binding domain maps to 88–154; the sequence is MRLDKSFSIG…IKKNIDLFQR (67 aa).

It belongs to the universal ribosomal protein uS4 family. As to quaternary structure, part of the 30S ribosomal subunit. Contacts protein S5. The interaction surface between S4 and S5 is involved in control of translational fidelity.

It localises to the plastid. It is found in the chloroplast. Functionally, one of the primary rRNA binding proteins, it binds directly to 16S rRNA where it nucleates assembly of the body of the 30S subunit. With S5 and S12 plays an important role in translational accuracy. This Pinus thunbergii (Japanese black pine) protein is Small ribosomal subunit protein uS4c (rps4).